A 363-amino-acid polypeptide reads, in one-letter code: Cytoplasmic tRNA 2-thiolation protein 1 (363 aa).

The segment at 337-363 (DGDCEQQATRSERNRSSLQGKHGNFDF) is disordered.

It belongs to the TtcA family. CTU1/NCS6/ATPBD3 subfamily.

The protein localises to the cytoplasm. The protein operates within tRNA modification; 5-methoxycarbonylmethyl-2-thiouridine-tRNA biosynthesis. Plays a central role in 2-thiolation of mcm(5)S(2)U at tRNA wobble positions of tRNA(Lys), tRNA(Glu) and tRNA(Gln). Directly binds tRNAs and probably acts by catalyzing adenylation of tRNAs, an intermediate required for 2-thiolation. It is unclear whether it acts as a sulfurtransferase that transfers sulfur from thiocarboxylated URM1 onto the uridine of tRNAs at wobble position. In Oryza sativa subsp. japonica (Rice), this protein is Cytoplasmic tRNA 2-thiolation protein 1.